A 270-amino-acid polypeptide reads, in one-letter code: Proteasome subunit alpha (270 aa).

The disordered stretch occupies residues 229 to 270 (LLDTEAAGSTPTDAPSDTEDGDSTDGTDRADGTTDSTEETEK). Residues 244-253 (SDTEDGDSTD) show a composition bias toward acidic residues.

The protein belongs to the peptidase T1A family. The 20S proteasome core is composed of 14 alpha and 14 beta subunits that assemble into four stacked heptameric rings, resulting in a barrel-shaped structure. The two inner rings, each composed of seven catalytic beta subunits, are sandwiched by two outer rings, each composed of seven alpha subunits. The catalytic chamber with the active sites is on the inside of the barrel. Has a gated structure, the ends of the cylinder being occluded by the N-termini of the alpha-subunits. Is capped by the proteasome-associated ATPase, ARC.

The protein localises to the cytoplasm. It functions in the pathway protein degradation; proteasomal Pup-dependent pathway. With respect to regulation, the formation of the proteasomal ATPase ARC-20S proteasome complex, likely via the docking of the C-termini of ARC into the intersubunit pockets in the alpha-rings, may trigger opening of the gate for substrate entry. Interconversion between the open-gate and close-gate conformations leads to a dynamic regulation of the 20S proteasome proteolysis activity. In terms of biological role, component of the proteasome core, a large protease complex with broad specificity involved in protein degradation. The chain is Proteasome subunit alpha from Streptomyces griseus subsp. griseus (strain JCM 4626 / CBS 651.72 / NBRC 13350 / KCC S-0626 / ISP 5235).